A 341-amino-acid chain; its full sequence is Phosphate acyltransferase (341 aa).

The protein belongs to the PlsX family. In terms of assembly, homodimer. Probably interacts with PlsY.

The protein localises to the cytoplasm. It catalyses the reaction a fatty acyl-[ACP] + phosphate = an acyl phosphate + holo-[ACP]. Its pathway is lipid metabolism; phospholipid metabolism. In terms of biological role, catalyzes the reversible formation of acyl-phosphate (acyl-PO(4)) from acyl-[acyl-carrier-protein] (acyl-ACP). This enzyme utilizes acyl-ACP as fatty acyl donor, but not acyl-CoA. The protein is Phosphate acyltransferase of Aliivibrio salmonicida (strain LFI1238) (Vibrio salmonicida (strain LFI1238)).